A 186-amino-acid chain; its full sequence is Peptide deformylase (186 aa).

Fe cation contacts are provided by Cys113 and His156. Glu157 is a catalytic residue. His160 provides a ligand contact to Fe cation.

Belongs to the polypeptide deformylase family. The cofactor is Fe(2+).

The catalysed reaction is N-terminal N-formyl-L-methionyl-[peptide] + H2O = N-terminal L-methionyl-[peptide] + formate. Removes the formyl group from the N-terminal Met of newly synthesized proteins. Requires at least a dipeptide for an efficient rate of reaction. N-terminal L-methionine is a prerequisite for activity but the enzyme has broad specificity at other positions. The protein is Peptide deformylase of Ligilactobacillus salivarius (strain UCC118) (Lactobacillus salivarius).